Here is a 71-residue protein sequence, read N- to C-terminus: Large ribosomal subunit protein uL29 (71 aa).

It belongs to the universal ribosomal protein uL29 family.

In Roseiflexus sp. (strain RS-1), this protein is Large ribosomal subunit protein uL29.